The primary structure comprises 338 residues: Probable cytosolic iron-sulfur protein assembly protein Ciao1 (338 aa).

WD repeat units follow at residues 12–51 (GHRG…RWVP), 58–97 (GHTR…FECN), 102–141 (GHEN…EYEC), 147–186 (THSQ…SDWS), 193–232 (SHDS…NEFG), 234–252 (ACPD…LSGF), 253–291 (HSRA…PANE), and 302–338 (AHSQ…EDDE).

It belongs to the WD repeat CIA1 family.

Functionally, essential component of the cytosolic iron-sulfur (Fe/S) protein assembly machinery. Required for the maturation of extramitochondrial Fe/S proteins. In Culex quinquefasciatus (Southern house mosquito), this protein is Probable cytosolic iron-sulfur protein assembly protein Ciao1.